Here is a 645-residue protein sequence, read N- to C-terminus: Protein FAM47B (645 aa).

Composition is skewed to basic and acidic residues over residues 1-11 (MGDRRPQDRPR), 238-251 (EPPETRASHLRVDP), and 288-299 (PETRVSHLHPEP). Disordered stretches follow at residues 1 to 23 (MGDRRPQDRPRSQGMDSKPWYCD) and 168 to 321 (AREK…SLCP).

This sequence belongs to the FAM47 family.

This is Protein FAM47B (FAM47B) from Homo sapiens (Human).